The primary structure comprises 229 residues: Ribonuclease 3 (229 aa).

Residues 5–127 (LSRLERQLGY…LIGAIYLDAG (123 aa)) form the RNase III domain. Glu40 is a binding site for Mg(2+). The active site involves Asp44. Residues Asp113 and Glu116 each coordinate Mg(2+). Residue Glu116 is part of the active site. The region spanning 154–224 (DPKTRLQEFL…AAAALIALGV (71 aa)) is the DRBM domain.

It belongs to the ribonuclease III family. As to quaternary structure, homodimer. Requires Mg(2+) as cofactor.

It is found in the cytoplasm. It catalyses the reaction Endonucleolytic cleavage to 5'-phosphomonoester.. Its function is as follows. Digests double-stranded RNA. Involved in the processing of primary rRNA transcript to yield the immediate precursors to the large and small rRNAs (23S and 16S). Processes some mRNAs, and tRNAs when they are encoded in the rRNA operon. Processes pre-crRNA and tracrRNA of type II CRISPR loci if present in the organism. The protein is Ribonuclease 3 of Pseudomonas fluorescens (strain Pf0-1).